The primary structure comprises 80 residues: Protein CEBPZOS (80 aa).

A helical membrane pass occupies residues 15–32 (GVLVAELVGVFGAYFLFS).

It is found in the mitochondrion membrane. The polypeptide is Protein CEBPZOS (Homo sapiens (Human)).